A 153-amino-acid chain; its full sequence is Movement protein TGB3 (153 aa).

Residues 1–50 (MEAPAITHSSGCVCSDCQWSGSPTVDTKVYLGSGTHANTTKTRETSFLSV) are Cytoplasmic-facing. Residues 51–71 (LNDNAWLFVIAALILCLYFII) form a helical membrane-spanning segment. The Lumenal segment spans residues 72 to 127 (SKPHVDAVYTEFHQDLNGFSMKLAPGVPIDPKVIAAVKNWQKYPFGTDPRENMVTS). The helical transmembrane segment at 128–148 (IVSGLRHSFCILLLVVVLLVY) threads the bilayer. Topologically, residues 149-153 (VCHKP) are cytoplasmic.

It belongs to the virgaviridae TGB3 movement protein family. Interacts with movement proteins TGB1 and TGB2. TGB1-TGB3-TGB2 complex formation is enhanced by ATP hydrolysis.

The protein resides in the host cell junction. Its subcellular location is the host plasmodesma. The protein localises to the host endoplasmic reticulum membrane. It localises to the host cytoplasm. It is found in the host cytoskeleton. Functionally, participates in the transport of viral genome to neighboring plant cells directly through plasmodesmata, without any budding. TGBp2 and TGBp3 are necessary for intracellular delivery of TGBp1-containing vRNPs to plasmodesmata. Can gate plasmodesmata and increase their size exclusion limit. Induces host actin cytoskeleton network thickening, which probably plays a major role in virus cell-to-cell movement. This Arachis hypogaea (Peanut) protein is Movement protein TGB3.